A 274-amino-acid chain; its full sequence is Large ribosomal subunit protein uL2 (274 aa).

Residues 223 to 274 (VAMNPVDHPHGGGEGKTSGGRHPVSPWGVPTKGYKTRSNKRTDKFIVRRRAK) are disordered.

Belongs to the universal ribosomal protein uL2 family. As to quaternary structure, part of the 50S ribosomal subunit. Forms a bridge to the 30S subunit in the 70S ribosome.

One of the primary rRNA binding proteins. Required for association of the 30S and 50S subunits to form the 70S ribosome, for tRNA binding and peptide bond formation. It has been suggested to have peptidyltransferase activity; this is somewhat controversial. Makes several contacts with the 16S rRNA in the 70S ribosome. This is Large ribosomal subunit protein uL2 from Colwellia psychrerythraea (strain 34H / ATCC BAA-681) (Vibrio psychroerythus).